A 484-amino-acid polypeptide reads, in one-letter code: Aspartyl/glutamyl-tRNA(Asn/Gln) amidotransferase subunit B (484 aa).

This sequence belongs to the GatB/GatE family. GatB subfamily. As to quaternary structure, heterotrimer of A, B and C subunits.

The enzyme catalyses L-glutamyl-tRNA(Gln) + L-glutamine + ATP + H2O = L-glutaminyl-tRNA(Gln) + L-glutamate + ADP + phosphate + H(+). The catalysed reaction is L-aspartyl-tRNA(Asn) + L-glutamine + ATP + H2O = L-asparaginyl-tRNA(Asn) + L-glutamate + ADP + phosphate + 2 H(+). Allows the formation of correctly charged Asn-tRNA(Asn) or Gln-tRNA(Gln) through the transamidation of misacylated Asp-tRNA(Asn) or Glu-tRNA(Gln) in organisms which lack either or both of asparaginyl-tRNA or glutaminyl-tRNA synthetases. The reaction takes place in the presence of glutamine and ATP through an activated phospho-Asp-tRNA(Asn) or phospho-Glu-tRNA(Gln). This is Aspartyl/glutamyl-tRNA(Asn/Gln) amidotransferase subunit B from Bordetella parapertussis (strain 12822 / ATCC BAA-587 / NCTC 13253).